The sequence spans 89 residues: Putative septation protein SpoVG (89 aa).

It belongs to the SpoVG family.

Could be involved in septation. The sequence is that of Putative septation protein SpoVG from Heliobacterium modesticaldum (strain ATCC 51547 / Ice1).